The sequence spans 314 residues: Homeobox-leucine zipper protein HAT7 (314 aa).

Residues 77–109 (HHHLTQKSPTTTNNMNDQDQVGEEDNLSDDGSH) form a disordered region. Over residues 82 to 95 (QKSPTTTNNMNDQD) the composition is skewed to polar residues. Residues 112-171 (LGEKKKRLNLEQVRALEKSFELGNKLEPERKMQLAKALGLQPRQIAIWFQNRRARWKTKQ) constitute a DNA-binding region (homeobox). The segment at 172-207 (LERDYDSLKKQFDVLKSDNDSLLAHNKKLHAELVAL) is leucine-zipper.

The protein belongs to the HD-ZIP homeobox family. Class I subfamily. Expressed predominantly in flowers, and in the cortex of the root and the stem.

The protein localises to the nucleus. Probable transcription factor. This chain is Homeobox-leucine zipper protein HAT7 (HAT7), found in Arabidopsis thaliana (Mouse-ear cress).